The sequence spans 288 residues: ATP synthase gamma chain 1 (288 aa).

It belongs to the ATPase gamma chain family. In terms of assembly, F-type ATPases have 2 components, CF(1) - the catalytic core - and CF(0) - the membrane proton channel. CF(1) has five subunits: alpha(3), beta(3), gamma(1), delta(1), epsilon(1). CF(0) has three main subunits: a, b and c.

The protein localises to the cell inner membrane. In terms of biological role, produces ATP from ADP in the presence of a proton gradient across the membrane. The gamma chain is believed to be important in regulating ATPase activity and the flow of protons through the CF(0) complex. In Photobacterium profundum (strain SS9), this protein is ATP synthase gamma chain 1.